A 138-amino-acid chain; its full sequence is ATP synthase epsilon chain (138 aa).

It belongs to the ATPase epsilon chain family. As to quaternary structure, F-type ATPases have 2 components, CF(1) - the catalytic core - and CF(0) - the membrane proton channel. CF(1) has five subunits: alpha(3), beta(3), gamma(1), delta(1), epsilon(1). CF(0) has three main subunits: a, b and c.

The protein resides in the cell inner membrane. Its function is as follows. Produces ATP from ADP in the presence of a proton gradient across the membrane. The sequence is that of ATP synthase epsilon chain from Blochmanniella floridana.